A 67-amino-acid chain; its full sequence is uncharacterized protein (67 aa).

2 consecutive transmembrane segments (helical) span residues 6–26 (GQLW…CVLM) and 38–58 (NNII…IIII).

Its subcellular location is the membrane. This is an uncharacterized protein from Dictyostelium discoideum (Social amoeba).